Here is a 330-residue protein sequence, read N- to C-terminus: Protein pelota homolog (330 aa).

The protein belongs to the eukaryotic release factor 1 family. Pelota subfamily. As to quaternary structure, monomer. The cofactor is a divalent metal cation.

The protein resides in the cytoplasm. In terms of biological role, may function in recognizing stalled ribosomes, interact with stem-loop structures in stalled mRNA molecules, and effect endonucleolytic cleavage of the mRNA. May play a role in the release non-functional ribosomes and degradation of damaged mRNAs. Has endoribonuclease activity. In Pyrobaculum neutrophilum (strain DSM 2338 / JCM 9278 / NBRC 100436 / V24Sta) (Thermoproteus neutrophilus), this protein is Protein pelota homolog.